Consider the following 327-residue polypeptide: Interleukin-12 subunit beta (327 aa).

The first 22 residues, 1-22 (MCHQKLTISWFAMVLLVSPLMA), serve as a signal peptide directing secretion. Positions 23-106 (IWELEKDVYV…LSHSRLLLHK (84 aa)) constitute an Ig-like C2-type domain. Cysteines 50 and 90 form a disulfide. Asn-125, Asn-135, Asn-223, and Asn-315 each carry an N-linked (GlcNAc...) asparagine glycan. The Fibronectin type-III domain occupies 238–327 (PPKNLQLKPL…WSEWASVSCN (90 aa)).

It belongs to the IL-12B family. As to quaternary structure, heterodimer with IL12A; disulfide-linked. The heterodimer is known as interleukin IL-12. Heterodimer with IL23A; disulfide-linked. The heterodimer is known as interleukin IL-23. Also secreted as a monomer. Interacts with NBR1; this interaction promotes IL-12 secretion.

The protein resides in the secreted. Functionally, cytokine that can act as a growth factor for activated T and NK cells, enhance the lytic activity of NK/lymphokine-activated killer cells, and stimulate the production of IFN-gamma by resting PBMC. Its function is as follows. Associates with IL23A to form the IL-23 interleukin, a heterodimeric cytokine which functions in innate and adaptive immunity. IL-23 may constitute with IL-17 an acute response to infection in peripheral tissues. IL-23 binds to a heterodimeric receptor complex composed of IL12RB1 and IL23R, activates the Jak-Stat signaling cascade, stimulates memory rather than naive T-cells and promotes production of pro-inflammatory cytokines. IL-23 induces autoimmune inflammation and thus may be responsible for autoimmune inflammatory diseases and may be important for tumorigenesis. The sequence is that of Interleukin-12 subunit beta (IL12B) from Sigmodon hispidus (Hispid cotton rat).